The following is a 35-amino-acid chain: Photosystem II reaction center protein M (35 aa).

A helical membrane pass occupies residues 5–25 (ILAFIATALFILVPTAFLLII).

This sequence belongs to the PsbM family. PSII is composed of 1 copy each of membrane proteins PsbA, PsbB, PsbC, PsbD, PsbE, PsbF, PsbH, PsbI, PsbJ, PsbK, PsbL, PsbM, PsbT, PsbX, PsbY, PsbZ, Psb30/Ycf12, at least 3 peripheral proteins of the oxygen-evolving complex and a large number of cofactors. It forms dimeric complexes.

It localises to the plastid. It is found in the chloroplast thylakoid membrane. In terms of biological role, one of the components of the core complex of photosystem II (PSII). PSII is a light-driven water:plastoquinone oxidoreductase that uses light energy to abstract electrons from H(2)O, generating O(2) and a proton gradient subsequently used for ATP formation. It consists of a core antenna complex that captures photons, and an electron transfer chain that converts photonic excitation into a charge separation. This subunit is found at the monomer-monomer interface. The sequence is that of Photosystem II reaction center protein M from Amborella trichopoda.